The following is a 1002-amino-acid chain: Mannan endo-1,4-beta-mannosidase (1002 aa).

Positions 1–28 (MKTTVTKLLATVAAASTIFGMSTLPAFA) are cleaved as a signal peptide. The GH26 domain maps to 49 to 396 (AETRALFDKL…ADSNKNLMAS (348 aa)). His144 is a substrate binding site. Glu205 serves as the catalytic Proton donor. The substrate site is built by Trp210 and Tyr278. Glu316 acts as the Nucleophile in catalysis. Lys384 is a binding site for substrate. CBM11 domains lie at 523-703 (VDNV…GKRD) and 717-897 (AKAQ…NEQT). Disordered regions lie at residues 702-722 (RDAY…AQSV) and 888-969 (PAEN…LSRT). The segment covering 707 to 719 (PNTNPTPGNTAKA) has biased composition (polar residues). Basic and acidic residues-rich tracts occupy residues 897-913 (TPKD…KEQE) and 952-966 (PDTK…KDGL). Residues 966–970 (LSRTG) carry the LPXTG sorting signal motif. Thr969 carries the pentaglycyl murein peptidoglycan amidated threonine modification. The propeptide at 970–1002 (GSNIISAIAAVAVLLLGGCAVLIARKRKGGDIE) is removed by sortase.

This sequence belongs to the glycosyl hydrolase 26 family. As to quaternary structure, homodimer.

The protein resides in the secreted. Its subcellular location is the cell wall. The catalysed reaction is Random hydrolysis of (1-&gt;4)-beta-D-mannosidic linkages in mannans, galactomannans and glucomannans.. Its function is as follows. Beta-mannanase likely involved in the utilization of carbohydrates in the human gut. Catalyzes the hydrolysis of different beta-1,4-linked mannans, such as ivory nut mannan, konjac glucomannan, as well as carob and guar gum galactomannans, to a mixture of oligosaccharides. The dominant product from ivory nut mannan is found to be mannotriose; mannobiose and mannotetraose are produced to a lesser extent. Does not hydrolyze mannobiose, and hydrolyzes mannotriose at a significantly lower rate than the longer oligosaccharides. In Bifidobacterium adolescentis (strain ATCC 15703 / DSM 20083 / NCTC 11814 / E194a), this protein is Mannan endo-1,4-beta-mannosidase.